The sequence spans 525 residues: GMP synthase [glutamine-hydrolyzing] (525 aa).

The Glutamine amidotransferase type-1 domain maps to 9–207 (RILILDFGSQ…VRDICQCEAL (199 aa)). Cys-86 (nucleophile) is an active-site residue. Catalysis depends on residues His-181 and Glu-183. The GMPS ATP-PPase domain maps to 208-400 (WTPAKIIDDA…LGLPYDMLYR (193 aa)). ATP is bound at residue 235–241 (SGGVDSS).

As to quaternary structure, homodimer.

It carries out the reaction XMP + L-glutamine + ATP + H2O = GMP + L-glutamate + AMP + diphosphate + 2 H(+). It functions in the pathway purine metabolism; GMP biosynthesis; GMP from XMP (L-Gln route): step 1/1. Catalyzes the synthesis of GMP from XMP. This Klebsiella pneumoniae (strain 342) protein is GMP synthase [glutamine-hydrolyzing].